The primary structure comprises 147 residues: MDTLTAIGRWLAKQHVVTWCVHHEGELWCANAFYLFDAQNVALYLLTDDKTRHAQMSGACAPVAGTVNGQPKTVARIRGVQFKGEIRRLEGQESDAARKAYLRRFPVARVLPAPVWEIRLDEIKFTDNTLGFGKKLHWLRDSRAQQA.

This sequence belongs to the UPF0306 family.

This Salmonella agona (strain SL483) protein is UPF0306 protein YhbP.